A 1054-amino-acid chain; its full sequence is Cell wall acid trehalase ARB_03719 (1054 aa).

The N-terminal stretch at 1 to 24 is a signal peptide; it reads MKQPNINLAACILWLLSIITAVAA. 7 N-linked (GlcNAc...) asparagine glycosylation sites follow: N138, N178, N183, N207, N239, N277, and N309. A substrate-binding site is contributed by 450-451; the sequence is WD. 4 N-linked (GlcNAc...) asparagine glycosylation sites follow: N495, N515, N572, and N580. E586 (proton donor) is an active-site residue. 2 N-linked (GlcNAc...) asparagine glycosylation sites follow: N620 and N648. 654–655 contributes to the substrate binding site; it reads KQ. N808 and N844 each carry an N-linked (GlcNAc...) asparagine glycan. The interval 950–974 is disordered; that stretch reads PLHPVTDPENGDASGSSPTTPASSV. A compositionally biased stretch (low complexity) spans 962–974; sequence ASGSSPTTPASSV. Residues N1004, N1007, and N1039 are each glycosylated (N-linked (GlcNAc...) asparagine).

This sequence belongs to the glycosyl hydrolase 65 family.

It localises to the secreted. The protein localises to the cell wall. It catalyses the reaction alpha,alpha-trehalose + H2O = alpha-D-glucose + beta-D-glucose. Functionally, cell wall acid trehalase that catalyzes hydrolysis of the disaccharide trehalose and required for growth on trehalose as carbon source. Plays a role in virulence. The chain is Cell wall acid trehalase ARB_03719 from Arthroderma benhamiae (strain ATCC MYA-4681 / CBS 112371) (Trichophyton mentagrophytes).